The following is a 663-amino-acid chain: Putative ankyrin repeat protein R219 (663 aa).

5 ANK repeats span residues 91 to 118 (FRIK…GYKV), 119 to 148 (DFDS…KLSS), 200 to 229 (ANQQ…KDGT), 258 to 288 (DWHV…KINP), and 322 to 351 (YFSH…GITV).

The protein is Putative ankyrin repeat protein R219 of Acanthamoeba polyphaga mimivirus (APMV).